The primary structure comprises 361 residues: MIVRTEDQKLVDVDDVDCSFFLVTVDLWSADGKQEMNLVLHPSSTDKYAPPNPPTKPSASTTRRRTISSSSRPPGHQASNSSTPAPPRPDEQPPSSNGSGYYPSQSQDNLTPSSPYPPHSNSEQPQTWGYPPPPPIDRAAPFPPPVLPSIQSFNRTASGDWNPSNNDDNYPIDPALRNPEGYTNNAQPDQPTYGSGTTYPPNYQTPPMPPNSGNATPQNNIPRNLATYTRTLVGPLSANACRLLDEHRKPGIFFLFQDLSVRTEGTFRLRMRLMNVGAPPAPEPGSCRVHNDISPILAQTFTEPFIVYSAKRFPGVPDTTALSIAFGNQGQKLPLRNRHGTGSKRRRRNQSGSEGESEDDS.

Residues 1 to 336 (MIVRTEDQKL…GNQGQKLPLR (336 aa)) enclose the Velvet domain. Disordered regions lie at residues 42–222 (PSST…NNIP) and 327–361 (GNQGQKLPLRNRHGTGSKRRRRNQSGSEGESEDDS). Composition is skewed to low complexity over residues 57–74 (PSASTTRRRTISSSSRPP) and 93–107 (PPSSNGSGYYPSQSQ). Over residues 108–127 (DNLTPSSPYPPHSNSEQPQT) the composition is skewed to polar residues. Positions 130–147 (YPPPPPIDRAAPFPPPVL) are enriched in pro residues. Polar residues-rich tracts occupy residues 149–168 (SIQSFNRTASGDWNPSNNDD), 181–196 (GYTNNAQPDQPTYGSG), and 212–222 (SGNATPQNNIP). The segment covering 335-349 (LRNRHGTGSKRRRRN) has biased composition (basic residues).

The protein belongs to the velvet family. VelB subfamily. As to quaternary structure, component of the heterotrimeric velvet complex composed of laeA, veA and velB; VeA acting as a bridging protein between laeA and velB. Forms a heterodimeric complex with vosA; the formation of the velB-vosA complex is light-dependent.

Its subcellular location is the nucleus. It is found in the cytoplasm. Its function is as follows. Component of the velvet transcription factor complex that controls sexual/asexual developmental ratio in response to light, promoting sexual development in the darkness while stimulating asexual sporulation under illumination. The velvet complex acts as a global regulator for secondary metabolite gene expression. Component of the velB-VosA heterodimeric complex that plays a dual role in activating genes associated with spore maturation and repressing certain development-associated genes. The velB-VosA complex binds DNA through the DNA-binding domain of vosA that recognizes an 11-nucleotide consensus sequence 5'-CTGGCCGCGGC-3' consisting of two motifs in the promoters of key developmental regulatory genes. In Coprinopsis cinerea (strain Okayama-7 / 130 / ATCC MYA-4618 / FGSC 9003) (Inky cap fungus), this protein is Velvet complex subunit B.